Here is a 564-residue protein sequence, read N- to C-terminus: Tripeptidyl-peptidase 1 (564 aa).

Residues Met-1–Cys-19 form the signal peptide. Residues Ser-20–Gly-195 constitute a propeptide, removed in mature form. An intrachain disulfide couples Cys-111 to Cys-122. The Peptidase S53 domain maps to Gly-199–Pro-564. N-linked (GlcNAc...) asparagine glycans are attached at residues Asn-210 and Asn-222. Residues Glu-272 and Asp-276 each act as charge relay system in the active site. N-linked (GlcNAc...) asparagine glycans are attached at residues Asn-286, Asn-313, and Asn-443. 2 disulfide bridges follow: Cys-365/Cys-527 and Cys-523/Cys-538. The Charge relay system role is filled by Ser-475. Residues Asp-518 and Val-519 each coordinate Ca(2+). Positions 540, 542, and 544 each coordinate Ca(2+).

As to quaternary structure, monomer. Interacts with CLN5. Interacts with CLN3. It depends on Ca(2+) as a cofactor. Post-translationally, activated by autocatalytic proteolytical processing upon acidification. N-glycosylation is required for processing and activity.

It localises to the lysosome. The protein resides in the melanosome. It carries out the reaction Release of an N-terminal tripeptide from a polypeptide, but also has endopeptidase activity.. In terms of biological role, lysosomal serine protease with tripeptidyl-peptidase I activity. May act as a non-specific lysosomal peptidase which generates tripeptides from the breakdown products produced by lysosomal proteinases. Requires substrates with an unsubstituted N-terminus. This is Tripeptidyl-peptidase 1 (TPP1) from Pongo abelii (Sumatran orangutan).